The sequence spans 189 residues: Peptidyl-tRNA hydrolase (189 aa).

Tyr15 contacts tRNA. His20 acts as the Proton acceptor in catalysis. Tyr64, Asn66, and Asn112 together coordinate tRNA.

The protein belongs to the PTH family. As to quaternary structure, monomer.

The protein resides in the cytoplasm. The enzyme catalyses an N-acyl-L-alpha-aminoacyl-tRNA + H2O = an N-acyl-L-amino acid + a tRNA + H(+). In terms of biological role, hydrolyzes ribosome-free peptidyl-tRNAs (with 1 or more amino acids incorporated), which drop off the ribosome during protein synthesis, or as a result of ribosome stalling. Catalyzes the release of premature peptidyl moieties from peptidyl-tRNA molecules trapped in stalled 50S ribosomal subunits, and thus maintains levels of free tRNAs and 50S ribosomes. In Sulfurihydrogenibium sp. (strain YO3AOP1), this protein is Peptidyl-tRNA hydrolase.